An 832-amino-acid chain; its full sequence is Regulator of drug sensitivity 1 (832 aa).

The segment at residues 15-42 is a DNA-binding region (zn(2)-C6 fungal-type); sequence CLQCKKIKRKCDKLRPACSRCQQNSLQC.

Its subcellular location is the nucleus. Zinc cluster transcription factor involved in resistance to cycloheximide. This chain is Regulator of drug sensitivity 1 (RDS1), found in Saccharomyces cerevisiae (strain ATCC 204508 / S288c) (Baker's yeast).